Consider the following 140-residue polypeptide: Small ribosomal subunit protein uS19 (140 aa).

Residues 55–74 (LAEARESGTEETANNPIRTH) form a disordered region.

Belongs to the universal ribosomal protein uS19 family.

In terms of biological role, protein S19 forms a complex with S13 that binds strongly to the 16S ribosomal RNA. The chain is Small ribosomal subunit protein uS19 from Halobacterium salinarum (strain ATCC 29341 / DSM 671 / R1).